The chain runs to 1302 residues: Multidrug resistance protein 1 (1302 aa).

A helical membrane pass occupies residues 43–63 (GVFEIILLIIGIIGSIGVGCL). The ABC transmembrane type-1 1 domain maps to 51–360 (IIGIIGSIGV…ISTPINILNS (310 aa)). N-linked (GlcNAc...) asparagine glycosylation occurs at N83. 5 helical membrane-spanning segments follow: residues 118-138 (LYFA…FFVL), 192-212 (LFQT…KCWD), 213-233 (LTLV…GLGM), 292-312 (IGIG…NALG), and 331-351 (AGTV…LSQI). Residues 395 to 634 (IRFEDVQFVY…KGTYYGLVKR (240 aa)) form the ABC transporter 1 domain. Residue 430 to 437 (GASGCGKS) participates in ATP binding. N-linked (GlcNAc...) asparagine glycosylation occurs at N663. Residues 712–732 (YIFCTLGLIGGIGAGAAFPFY) traverse the membrane as a helical segment. One can recognise an ABC transmembrane type-1 2 domain in the interval 713–1022 (IFCTLGLIGG…IGNVLPDVGK (310 aa)). An N-linked (GlcNAc...) asparagine glycan is attached at N751. A helical transmembrane segment spans residues 765-785 (MIIICIGIITMISFFCYVGLF). N808 carries an N-linked (GlcNAc...) asparagine glycan. The next 2 membrane-spanning stretches (helical) occupy residues 841–861 (VGDI…GLYF) and 862–882 (SWKL…FMFI). The ABC transporter 2 domain maps to 1057-1296 (IEFKNIHFRY…KGFYYTLAMQ (240 aa)). Residue 1092–1099 (GASGCGKS) coordinates ATP.

This sequence belongs to the ABC transporter superfamily. ABCB family. Multidrug resistance exporter (TC 3.A.1.201) subfamily.

The protein resides in the membrane. The enzyme catalyses ATP + H2O + xenobioticSide 1 = ADP + phosphate + xenobioticSide 2.. Its function is as follows. Energy-dependent efflux pump responsible for decreased drug accumulation in multidrug resistance parasites. In Entamoeba histolytica (strain ATCC 30459 / HM-1:IMSS / ABRM), this protein is Multidrug resistance protein 1.